We begin with the raw amino-acid sequence, 486 residues long: Probable transporter MCH1 (486 aa).

At 1–29 (MPLSKVEHYLSYHTRLLLPHVLSLQSSHR) the chain is on the cytoplasmic side. A helical transmembrane segment spans residues 30-50 (VAYIFSLLSAVSTGFITLISL). Residues 51 to 67 (YSQPWQKHLNYSSWQIN) are Vacuolar-facing. Residue Asn-60 is glycosylated (N-linked (GlcNAc...) asparagine). The chain crosses the membrane as a helical span at residues 68 to 88 (TIASMTNLGMYLTPPILGMIA). The Cytoplasmic segment spans residues 89–93 (DSHGP). A helical membrane pass occupies residues 94-114 (ITLSLLAIIGFIPSYSYLAYV). The Vacuolar portion of the chain corresponds to 115-133 (FNHPELSLGGNGDSSFNLS). N-linked (GlcNAc...) asparagine glycosylation is present at Asn-131. A helical transmembrane segment spans residues 134-154 (IICFVFIGISTSALYFSALLT). Over 155–163 (CTKLYPHTK) the chain is Cytoplasmic. Residues 164–184 (LLSISLPTTCYGISSVVGSQL) form a helical membrane-spanning segment. Topologically, residues 185 to 212 (LRIKWFWSSNASSSSSNSDLNLGRVFQT) are vacuolar. Residue Asn-194 is glycosylated (N-linked (GlcNAc...) asparagine). Residues 213–233 (FALVYVVIGLLAWIATSVVSL) traverse the membrane as a helical segment. Residues 234 to 279 (LHFNEEQDNQKRLDDQTDVEQSPLLERSNHVQEKFTQTMLRIFSDP) lie on the Cytoplasmic side of the membrane. Ser-255 bears the Phosphoserine mark. The chain crosses the membrane as a helical span at residues 280 to 300 (VTYILAVSILLSLGPLEMFIA). The Vacuolar portion of the chain corresponds to 301–320 (NMGSLTNLLVQLDAPTLSTK). The chain crosses the membrane as a helical span at residues 321–343 (LLSTYALSSTFTRLLTGIVADFF). At 344 to 347 (AKKK) the chain is on the cytoplasmic side. A helical membrane pass occupies residues 348–368 (ISIKWILLTFLSLGVCAQLFL). At 369–385 (LKMTSSASPWGLVPTGS) the chain is on the vacuolar side. A helical membrane pass occupies residues 386-406 (LVGIVYGGLFTVYPTLVLLVW). The Cytoplasmic portion of the chain corresponds to 407–413 (GERSFGT). Residues 414-434 (VYGSLLIAPAIGSMIFCMLYA) form a helical membrane-spanning segment. Topologically, residues 435–456 (KFYDSRCMSGGGDLRNPSCISA) are vacuolar. Residues 457–477 (VYKYSSIAFVVSAVLSAVVFW) traverse the membrane as a helical segment. Residues 478 to 486 (KLKSRKLRI) are Cytoplasmic-facing.

This sequence belongs to the major facilitator superfamily.

Its subcellular location is the vacuole membrane. Functionally, probable transporter. Does not act in the transport of monocarboxylic acids across the plasma membrane. The sequence is that of Probable transporter MCH1 (MCH1) from Saccharomyces cerevisiae (strain ATCC 204508 / S288c) (Baker's yeast).